A 95-amino-acid polypeptide reads, in one-letter code: Transcription and mRNA export factor ENY2-1 (95 aa).

Belongs to the ENY2 family. In terms of assembly, component of the nuclear pore complex (NPC)-associated TREX-2 complex (transcription and export complex 2). Component of the SAGA transcription coactivator-HAT complex. Within the SAGA complex, participates in a subcomplex of SAGA called the DUB module (deubiquitination module).

Its subcellular location is the nucleus. It is found in the nucleoplasm. Involved in mRNA export coupled transcription activation by association with both the TREX-2 and the SAGA complexes. The transcription regulatory histone acetylation (HAT) complex SAGA is a multiprotein complex that activates transcription by remodeling chromatin and mediating histone acetylation and deubiquitination. Within the SAGA complex, participates in a subcomplex that specifically deubiquitinates histones. The SAGA complex is recruited to specific gene promoters by activators, where it is required for transcription. The TREX-2 complex functions in docking export-competent ribonucleoprotein particles (mRNPs) to the nuclear entrance of the nuclear pore complex (nuclear basket). TREX-2 participates in mRNA export and accurate chromatin positioning in the nucleus by tethering genes to the nuclear periphery. In Salmo salar (Atlantic salmon), this protein is Transcription and mRNA export factor ENY2-1 (eny2-1).